A 246-amino-acid chain; its full sequence is 14-3-3 protein beta/alpha (246 aa).

Met-1 is modified (N-acetylmethionine). Residue Thr-2 is modified to N-acetylthreonine; in 14-3-3 protein beta/alpha, N-terminally processed. Thr-2 carries the phosphothreonine modification. At Lys-5 the chain carries N6-acetyllysine. Lys-51 is subject to N6-acetyllysine; alternate. Lys-51 participates in a covalent cross-link: Glycyl lysine isopeptide (Lys-Gly) (interchain with G-Cter in SUMO2); alternate. The residue at position 60 (Ser-60) is a Phosphoserine. Position 70 is an N6-acetyllysine (Lys-70). A 3'-nitrotyrosine mark is found at Tyr-84 and Tyr-106. Lys-117 bears the N6-acetyllysine mark. A phosphoserine mark is found at Ser-186 and Ser-232.

It belongs to the 14-3-3 family. Homodimer. Interacts with SAMSN1 and PRKCE. Interacts with AKAP13. Interacts with SSH1 and TORC2/CRTC2. Interacts with ABL1; the interaction results in cytoplasmic location of ABL1 and inhibition of cABL-mediated apoptosis. Interacts with ROR2 (dimer); the interaction results in phosphorylation of YWHAB on tyrosine residues. Interacts with GAB2. Interacts with YAP1 (phosphorylated form). Interacts with the phosphorylated (by AKT1) form of SRPK2. Interacts with PKA-phosphorylated AANAT. Interacts with MYO1C. Interacts with SIRT2. Interacts with the 'Thr-369' phosphorylated form of DAPK2. Interacts with PI4KB, TBC1D22A and TBC1D22B. Interacts with the 'Ser-1134' and 'Ser-1161' phosphorylated form of SOS1. Interacts (via phosphorylated form) with YWHAB; this interaction occurs in a protein kinase AKT1-dependent manner. Interacts with SLITRK1. Interacts with SYNPO2 (phosphorylated form); YWHAB competes with ACTN2 for interaction with SYNPO2. Interacts with RIPOR2 (via phosphorylated form); this interaction occurs in a chemokine-dependent manner and does not compete for binding of RIPOR2 with RHOA nor blocks inhibition of RIPOR2-mediated RHOA activity. Interacts with MARK2 and MARK3. Interacts with TESK1; the interaction is dependent on the phosphorylation of TESK1 'Ser-439' and inhibits TESK1 kinase activity. Interacts with MEFV. Interacts with HDAC4. Interacts with ADAM22 (via C-terminus). In terms of processing, isoform alpha differs from isoform beta in being phosphorylated. Phosphorylated on Ser-60 by protein kinase C delta type catalytic subunit in a sphingosine-dependent fashion. Isoform Short contains a N-acetylmethionine at position 1.

The protein localises to the cytoplasm. It is found in the melanosome. In terms of biological role, adapter protein implicated in the regulation of a large spectrum of both general and specialized signaling pathways. Binds to a large number of partners, usually by recognition of a phosphoserine or phosphothreonine motif. Binding generally results in the modulation of the activity of the binding partner. Negative regulator of osteogenesis. Blocks the nuclear translocation of the phosphorylated form (by AKT1) of SRPK2 and antagonizes its stimulatory effect on cyclin D1 expression resulting in blockage of neuronal apoptosis elicited by SRPK2. Negative regulator of signaling cascades that mediate activation of MAP kinases via AKAP13. This is 14-3-3 protein beta/alpha (Ywhab) from Mus musculus (Mouse).